The sequence spans 292 residues: AhcY transcriptional activator HvrB (292 aa).

One can recognise an HTH lysR-type domain in the interval 10 to 67 (PPLTALRAFAATASEGGFSAAARKLNVTHAAIAQQVRALEADLDVPLVWRDGKHLHLT). The H-T-H motif DNA-binding region spans 27–46 (FSAAARKLNVTHAAIAQQVR).

The protein belongs to the LysR transcriptional regulatory family.

Functions as a low-light activator of ahcY expression (gene for S-adenosyl-L-homocysteine hydrolase) and as a high-light activator of an uncharacterized 21.6 kDa protein in the ahcY-hvrB intergenic region (orf5). It is also a negative regulator of its own expression. In Rhodobacter capsulatus (strain ATCC BAA-309 / NBRC 16581 / SB1003), this protein is AhcY transcriptional activator HvrB (hvrB).